A 449-amino-acid polypeptide reads, in one-letter code: Asparagine--tRNA ligase (449 aa).

This sequence belongs to the class-II aminoacyl-tRNA synthetase family. As to quaternary structure, homodimer.

The protein resides in the cytoplasm. It carries out the reaction tRNA(Asn) + L-asparagine + ATP = L-asparaginyl-tRNA(Asn) + AMP + diphosphate + H(+). This is Asparagine--tRNA ligase from Deinococcus geothermalis (strain DSM 11300 / CIP 105573 / AG-3a).